The primary structure comprises 189 residues: Protein GrpE (189 aa).

Positions Met-1–Leu-13 are enriched in polar residues. A disordered region spans residues Met-1–Asn-35.

Belongs to the GrpE family. In terms of assembly, homodimer.

The protein resides in the cytoplasm. Its function is as follows. Participates actively in the response to hyperosmotic and heat shock by preventing the aggregation of stress-denatured proteins, in association with DnaK and GrpE. It is the nucleotide exchange factor for DnaK and may function as a thermosensor. Unfolded proteins bind initially to DnaJ; upon interaction with the DnaJ-bound protein, DnaK hydrolyzes its bound ATP, resulting in the formation of a stable complex. GrpE releases ADP from DnaK; ATP binding to DnaK triggers the release of the substrate protein, thus completing the reaction cycle. Several rounds of ATP-dependent interactions between DnaJ, DnaK and GrpE are required for fully efficient folding. This chain is Protein GrpE, found in Polaromonas naphthalenivorans (strain CJ2).